Here is a 549-residue protein sequence, read N- to C-terminus: Glucose-6-phosphate isomerase (549 aa).

E355 (proton donor) is an active-site residue. Active-site residues include H386 and K514.

It belongs to the GPI family.

It is found in the cytoplasm. The enzyme catalyses alpha-D-glucose 6-phosphate = beta-D-fructose 6-phosphate. It functions in the pathway carbohydrate biosynthesis; gluconeogenesis. The protein operates within carbohydrate degradation; glycolysis; D-glyceraldehyde 3-phosphate and glycerone phosphate from D-glucose: step 2/4. Its function is as follows. Catalyzes the reversible isomerization of glucose-6-phosphate to fructose-6-phosphate. The sequence is that of Glucose-6-phosphate isomerase from Salmonella choleraesuis (strain SC-B67).